The following is a 276-amino-acid chain: Pantothenate synthetase (276 aa).

27-34 (MGALHKGH) provides a ligand contact to ATP. Catalysis depends on H34, which acts as the Proton donor. Residue Q58 coordinates (R)-pantoate. A beta-alanine-binding site is contributed by Q58. ATP is bound at residue 147–150 (GKKD). A (R)-pantoate-binding site is contributed by Q153. ATP contacts are provided by residues V176 and 184–187 (LSSR).

This sequence belongs to the pantothenate synthetase family. Homodimer.

The protein resides in the cytoplasm. The catalysed reaction is (R)-pantoate + beta-alanine + ATP = (R)-pantothenate + AMP + diphosphate + H(+). The protein operates within cofactor biosynthesis; (R)-pantothenate biosynthesis; (R)-pantothenate from (R)-pantoate and beta-alanine: step 1/1. In terms of biological role, catalyzes the condensation of pantoate with beta-alanine in an ATP-dependent reaction via a pantoyl-adenylate intermediate. In Helicobacter acinonychis (strain Sheeba), this protein is Pantothenate synthetase.